A 269-amino-acid polypeptide reads, in one-letter code: 4-hydroxy-tetrahydrodipicolinate reductase (269 aa).

Residues 8–13 (GAAGRM) and Glu34 each bind NAD(+). Position 35 (Arg35) interacts with NADP(+). Residues 98–100 (GTT) and 122–125 (APNY) each bind NAD(+). Catalysis depends on His155, which acts as the Proton donor/acceptor. Position 156 (His156) interacts with (S)-2,3,4,5-tetrahydrodipicolinate. Lys159 functions as the Proton donor in the catalytic mechanism. Residue 165 to 166 (GT) coordinates (S)-2,3,4,5-tetrahydrodipicolinate.

The protein belongs to the DapB family.

It localises to the cytoplasm. The catalysed reaction is (S)-2,3,4,5-tetrahydrodipicolinate + NAD(+) + H2O = (2S,4S)-4-hydroxy-2,3,4,5-tetrahydrodipicolinate + NADH + H(+). It catalyses the reaction (S)-2,3,4,5-tetrahydrodipicolinate + NADP(+) + H2O = (2S,4S)-4-hydroxy-2,3,4,5-tetrahydrodipicolinate + NADPH + H(+). It participates in amino-acid biosynthesis; L-lysine biosynthesis via DAP pathway; (S)-tetrahydrodipicolinate from L-aspartate: step 4/4. Its function is as follows. Catalyzes the conversion of 4-hydroxy-tetrahydrodipicolinate (HTPA) to tetrahydrodipicolinate. This Vibrio vulnificus (strain CMCP6) protein is 4-hydroxy-tetrahydrodipicolinate reductase.